The chain runs to 713 residues: Polyribonucleotide nucleotidyltransferase (713 aa).

Residues aspartate 485 and aspartate 491 each contribute to the Mg(2+) site. Residues 552-611 (PRIYTMKIDPKKIKDVIGKGGATVRSLTEETGTSIDIDDDGTVKIAAVDKNAVQEVMSRI) form the KH domain. The S1 motif domain occupies 621 to 689 (GVVYKGKVTR…RQGRIRLTMK (69 aa)). The interval 694 to 713 (DQTKNEENLLQSEEGSPVQE) is disordered. Residues 701–713 (NLLQSEEGSPVQE) show a composition bias toward polar residues.

It belongs to the polyribonucleotide nucleotidyltransferase family. As to quaternary structure, component of the RNA degradosome, which is a multiprotein complex involved in RNA processing and mRNA degradation. The cofactor is Mg(2+).

It is found in the cytoplasm. The catalysed reaction is RNA(n+1) + phosphate = RNA(n) + a ribonucleoside 5'-diphosphate. Its function is as follows. Involved in mRNA degradation. Catalyzes the phosphorolysis of single-stranded polyribonucleotides processively in the 3'- to 5'-direction. This is Polyribonucleotide nucleotidyltransferase from Histophilus somni (strain 2336) (Haemophilus somnus).